A 386-amino-acid polypeptide reads, in one-letter code: Enamidase (386 aa).

Zn(2+) is bound by residues histidine 67, histidine 69, and glutamate 164. Fe cation contacts are provided by glutamate 164, histidine 193, and histidine 220. Residue aspartate 276 coordinates Zn(2+).

As to quaternary structure, homotetramer. Dimer of dimers. The cofactor is Fe cation. Requires Zn(2+) as cofactor.

The catalysed reaction is 1,4,5,6-tetrahydro-6-oxonicotinate + 2 H2O = 2-formylglutarate + NH4(+). It functions in the pathway cofactor degradation; nicotinate degradation; propanoate and pyruvate from 6-hydroxynicotinate: step 2/8. In terms of biological role, decyclization of 6-oxo-1,4,5,6-tetrahydronicotinate to form 2-(enamine)glutarate, followed by hydrolysis to form (S)-2-formylglutarate. This chain is Enamidase, found in Eubacterium barkeri (Clostridium barkeri).